The chain runs to 1100 residues: DNA-directed RNA polymerase subunit beta (1100 aa).

Positions 1064–1100 (YEEDKEVDLMADVNQRRTPSRPTYESMSVGDIDDDDD) are disordered. Residues 1079-1089 (RRTPSRPTYES) show a composition bias toward polar residues.

It belongs to the RNA polymerase beta chain family. In terms of assembly, in cyanobacteria the RNAP catalytic core is composed of 2 alpha, 1 beta, 1 beta', 1 gamma and 1 omega subunit. When a sigma factor is associated with the core the holoenzyme is formed, which can initiate transcription.

It catalyses the reaction RNA(n) + a ribonucleoside 5'-triphosphate = RNA(n+1) + diphosphate. DNA-dependent RNA polymerase catalyzes the transcription of DNA into RNA using the four ribonucleoside triphosphates as substrates. The sequence is that of DNA-directed RNA polymerase subunit beta from Synechococcus sp. (strain ATCC 27144 / PCC 6301 / SAUG 1402/1) (Anacystis nidulans).